The sequence spans 190 residues: Guanylate kinase (190 aa).

The Guanylate kinase-like domain maps to 3–185 (NYIFIVSAPS…SLEQFCKYFE (183 aa)). 10 to 17 (APSGAGKS) is an ATP binding site.

It belongs to the guanylate kinase family.

The protein localises to the cytoplasm. It carries out the reaction GMP + ATP = GDP + ADP. In terms of biological role, essential for recycling GMP and indirectly, cGMP. The polypeptide is Guanylate kinase (Francisella tularensis subsp. tularensis (strain FSC 198)).